A 284-amino-acid chain; its full sequence is Trimeric intracellular cation channel type B-B (284 aa).

Topologically, residues 1–15 (MESLSEVSVQFSQLS) are lumenal. Residues 16–32 (MFPFFDMAHYLASVMSA) traverse the membrane as a helical segment. Over 33 to 44 (REQAGALDIASH) the chain is Cytoplasmic. Residues 45-68 (SPMASWFSAMLHCFGGGILSSILL) traverse the membrane as a helical segment. Over 69-79 (AEPPVGILANT) the chain is Lumenal. Residues 80-99 (TNIMLASAIWYMVYYFPYDL) traverse the membrane as a helical segment. Residues 100-102 (FYN) are Cytoplasmic-facing. The chain crosses the membrane as a helical span at residues 103–121 (CFFFLPIRLIAAGMKEVTR). A 1,2-diacyl-sn-glycero-3-phospho-(1D-myo-inositol-4,5-bisphosphate) contacts are provided by lysine 117 and arginine 121. The Lumenal portion of the chain corresponds to 122–139 (TWKILSGITHAHSHYKDA). Residues 140–157 (WLVMITIGWARGAGGGLI) traverse the membrane as a helical segment. The Cytoplasmic segment spans residues 158 to 178 (SNFEQLVRGVWKPESNEFLKM). Residues 179–196 (SYPVKVTLIGAVLFTLQH) form a helical membrane-spanning segment. Topologically, residues 197–204 (GHYLPISR) are lumenal. A helical membrane pass occupies residues 205-225 (HNLMFIYTMFLVSIKVTMMLT). At 226-284 (HSAGSPFLPLETPLHRILFGLRQNQAEVRESPSSSGAKGKPSKKTLDKDSGEQSNKKDK) the chain is on the cytoplasmic side. Positions 250 to 284 (QAEVRESPSSSGAKGKPSKKTLDKDSGEQSNKKDK) are disordered. Residues 269 to 284 (KTLDKDSGEQSNKKDK) are compositionally biased toward basic and acidic residues.

Belongs to the TMEM38 family. Homotrimer; conformation seems to be controled by binding to diacylglycerol (DAG).

The protein resides in the endoplasmic reticulum membrane. It carries out the reaction K(+)(in) = K(+)(out). Its activity is regulated as follows. Channel activity is activated by increased cytosolic Ca(2+) levels and blocked by luminal high Ca(2+) levels. Intracellular monovalent cation channel required for maintenance of rapid intracellular calcium release. Acts as a potassium counter-ion channel that functions in synchronization with calcium release from intracellular stores. Activated by increased cytosolic Ca(2+) levels. The chain is Trimeric intracellular cation channel type B-B (tmem38b-b) from Xenopus laevis (African clawed frog).